Reading from the N-terminus, the 314-residue chain is (+)-neomenthol dehydrogenase (314 aa).

NADP(+) is bound at residue 13–36; sequence VTGGNKGIGYETCRQLASKGVVVV. Serine 183 provides a ligand contact to substrate. Tyrosine 239 acts as the Proton acceptor in catalysis.

Belongs to the short-chain dehydrogenases/reductases (SDR) family. In terms of assembly, monomer. Expressed in flowers and red fruit tissues. Not detected in leaves, stems, roots or green fruits.

It carries out the reaction (+)-neomenthol + NADP(+) = (1R,4S)-menthone + NADPH + H(+). Its function is as follows. Involved in basal resistance against pathogens. The protein is (+)-neomenthol dehydrogenase (MNR1) of Capsicum annuum (Capsicum pepper).